The chain runs to 271 residues: 4,5-DOPA dioxygenase extradiol (271 aa).

Zn(2+) is bound by residues His-22, His-57, His-177, and His-234.

Belongs to the DODA-type extradiol aromatic ring-opening dioxygenase family. Monomer. Requires Zn(2+) as cofactor.

It is found in the cytoplasm. It catalyses the reaction L-dopa + O2 = 4-(L-alanin-3-yl)-2-hydroxy-cis,cis-muconate 6-semialdehyde + H(+). Its function is as follows. In vitro, opens the cyclic ring of dihydroxy-phenylalanine (DOPA) between carbons 4 and 5, thus producing an unstable seco-DOPA that rearranges nonenzymatically to betalamic acid. The physiological substrate is unknown. The sequence is that of 4,5-DOPA dioxygenase extradiol (ygiD) from Escherichia coli (strain K12).